A 746-amino-acid chain; its full sequence is Teichoic acid poly(glycerol phosphate) polymerase (746 aa).

Residues 473–477 (WHGTP), arginine 540, 573–574 (PT), 610–612 (RMH), 652–653 (SS), and aspartate 657 contribute to the CDP-glycerol site.

The protein belongs to the CDP-glycerol glycerophosphotransferase family.

The protein localises to the cell membrane. The catalysed reaction is 4-O-[(2R)-glycerylphospho]-N-acetyl-beta-D-mannosaminyl-(1-&gt;4)-N-acetyl-alpha-D-glucosaminyl di-trans,octa-cis-undecaprenyl diphosphate + n CDP-glycerol = 4-O-{[(2R)-1-glycerylphospho](n)-(2R)-1-glycerylphospho}-N-acetyl-beta-D-mannosaminyl-(1-&gt;4)-N-acetyl-alpha-D-glucosaminyl undecaprenyl diphosphate + n CMP + n H(+). The protein operates within cell wall biogenesis; poly(glycerol phosphate) teichoic acid biosynthesis. Its function is as follows. Responsible for the polymerization of the main chain of the major teichoic acid by sequential transfer of glycerol phosphate units from CDP-glycerol to the disaccharide linkage unit. Synthesizes polymers of approximately 35 glycerol phosphate units in length. The sequence is that of Teichoic acid poly(glycerol phosphate) polymerase (tagF) from Bacillus subtilis (strain 168).